A 500-amino-acid polypeptide reads, in one-letter code: Protein nucleotidyltransferase YdiU (500 aa).

G98, G100, R101, K124, D136, G137, R187, and R194 together coordinate ATP. Catalysis depends on D263, which acts as the Proton acceptor. Mg(2+) contacts are provided by N264 and D273. D273 is an ATP binding site.

The protein belongs to the SELO family. Requires Mg(2+) as cofactor. Mn(2+) is required as a cofactor.

It catalyses the reaction L-seryl-[protein] + ATP = 3-O-(5'-adenylyl)-L-seryl-[protein] + diphosphate. The enzyme catalyses L-threonyl-[protein] + ATP = 3-O-(5'-adenylyl)-L-threonyl-[protein] + diphosphate. The catalysed reaction is L-tyrosyl-[protein] + ATP = O-(5'-adenylyl)-L-tyrosyl-[protein] + diphosphate. It carries out the reaction L-histidyl-[protein] + UTP = N(tele)-(5'-uridylyl)-L-histidyl-[protein] + diphosphate. It catalyses the reaction L-seryl-[protein] + UTP = O-(5'-uridylyl)-L-seryl-[protein] + diphosphate. The enzyme catalyses L-tyrosyl-[protein] + UTP = O-(5'-uridylyl)-L-tyrosyl-[protein] + diphosphate. Nucleotidyltransferase involved in the post-translational modification of proteins. It can catalyze the addition of adenosine monophosphate (AMP) or uridine monophosphate (UMP) to a protein, resulting in modifications known as AMPylation and UMPylation. This is Protein nucleotidyltransferase YdiU from Herminiimonas arsenicoxydans.